Consider the following 272-residue polypeptide: 2,3,4,5-tetrahydropyridine-2,6-dicarboxylate N-succinyltransferase (272 aa).

Residues R104 and D141 each contribute to the substrate site.

It belongs to the transferase hexapeptide repeat family. Homotrimer.

It is found in the cytoplasm. It carries out the reaction (S)-2,3,4,5-tetrahydrodipicolinate + succinyl-CoA + H2O = (S)-2-succinylamino-6-oxoheptanedioate + CoA. It functions in the pathway amino-acid biosynthesis; L-lysine biosynthesis via DAP pathway; LL-2,6-diaminopimelate from (S)-tetrahydrodipicolinate (succinylase route): step 1/3. The polypeptide is 2,3,4,5-tetrahydropyridine-2,6-dicarboxylate N-succinyltransferase (Dechloromonas aromatica (strain RCB)).